Reading from the N-terminus, the 70-residue chain is Probable U6 snRNA-associated Sm-like protein (70 aa).

One can recognise a Sm domain in the interval 3–70; it reads DPFCFLKMYL…ILFVGPRLLL (68 aa).

This sequence belongs to the snRNP Sm proteins family.

The protein localises to the nucleus. Binds specifically to the 3'-terminal U-tract of U6 snRNA. This chain is Probable U6 snRNA-associated Sm-like protein, found in Encephalitozoon cuniculi (strain GB-M1) (Microsporidian parasite).